A 340-amino-acid chain; its full sequence is Glyceraldehyde-3-phosphate dehydrogenase (340 aa).

NAD(+) contacts are provided by residues 11–12 (TI) and Gly109. D-glyceraldehyde 3-phosphate is bound at residue 138-140 (SCN). Cys139 acts as the Nucleophile in catalysis. Arg167 provides a ligand contact to NAD(+). D-glyceraldehyde 3-phosphate is bound at residue 193–194 (HA). Residue Gln300 participates in NAD(+) binding.

Belongs to the glyceraldehyde-3-phosphate dehydrogenase family. In terms of assembly, homotetramer.

It localises to the cytoplasm. The catalysed reaction is D-glyceraldehyde 3-phosphate + phosphate + NADP(+) = (2R)-3-phospho-glyceroyl phosphate + NADPH + H(+). It catalyses the reaction D-glyceraldehyde 3-phosphate + phosphate + NAD(+) = (2R)-3-phospho-glyceroyl phosphate + NADH + H(+). It functions in the pathway carbohydrate degradation; glycolysis; pyruvate from D-glyceraldehyde 3-phosphate: step 1/5. This is Glyceraldehyde-3-phosphate dehydrogenase from Saccharolobus islandicus (strain Y.N.15.51 / Yellowstone #2) (Sulfolobus islandicus).